Reading from the N-terminus, the 98-residue chain is Large ribosomal subunit protein uL23 (98 aa).

It belongs to the universal ribosomal protein uL23 family. Part of the 50S ribosomal subunit. Contacts protein L29, and trigger factor when it is bound to the ribosome.

One of the early assembly proteins it binds 23S rRNA. One of the proteins that surrounds the polypeptide exit tunnel on the outside of the ribosome. Forms the main docking site for trigger factor binding to the ribosome. This chain is Large ribosomal subunit protein uL23, found in Bordetella petrii (strain ATCC BAA-461 / DSM 12804 / CCUG 43448).